Here is a 126-residue protein sequence, read N- to C-terminus: Large-conductance mechanosensitive channel (126 aa).

The next 2 helical transmembrane spans lie at 14–34 (VLDLAVGVIIGGAFTGIVKSL) and 69–89 (GAFLNDVINFLITAFVVFLLV).

It belongs to the MscL family. In terms of assembly, homopentamer.

The protein resides in the cell membrane. Functionally, channel that opens in response to stretch forces in the membrane lipid bilayer. May participate in the regulation of osmotic pressure changes within the cell. In Leuconostoc citreum (strain KM20), this protein is Large-conductance mechanosensitive channel.